Reading from the N-terminus, the 413-residue chain is S-adenosylmethionine synthase (413 aa).

Position 15 (histidine 15) interacts with ATP. Aspartate 17 contributes to the Mg(2+) binding site. Residue glutamate 43 coordinates K(+). Positions 56 and 100 each coordinate L-methionine. Residues glutamine 100–glutamate 110 are flexible loop. Residues aspartate 171–lysine 173, lysine 248–phenylalanine 249, aspartate 257, arginine 263–lysine 264, alanine 280, and lysine 284 contribute to the ATP site. L-methionine is bound at residue aspartate 257. Residue lysine 288 coordinates L-methionine.

This sequence belongs to the AdoMet synthase family. Homotetramer; dimer of dimers. Mg(2+) is required as a cofactor. K(+) serves as cofactor.

The protein localises to the cytoplasm. The catalysed reaction is L-methionine + ATP + H2O = S-adenosyl-L-methionine + phosphate + diphosphate. The protein operates within amino-acid biosynthesis; S-adenosyl-L-methionine biosynthesis; S-adenosyl-L-methionine from L-methionine: step 1/1. In terms of biological role, catalyzes the formation of S-adenosylmethionine (AdoMet) from methionine and ATP. The overall synthetic reaction is composed of two sequential steps, AdoMet formation and the subsequent tripolyphosphate hydrolysis which occurs prior to release of AdoMet from the enzyme. The protein is S-adenosylmethionine synthase of Prochlorococcus marinus (strain MIT 9515).